Reading from the N-terminus, the 284-residue chain is Putative ABC transporter ATP-binding protein MG468.1 homolog (284 aa).

The region spanning 53–284 is the ABC transporter domain; that stretch reads VLFKGVCKAV…PKTINEINWV (232 aa). 89–96 contacts ATP; it reads GKSGSGKT.

Belongs to the ABC transporter superfamily.

The protein is Putative ABC transporter ATP-binding protein MG468.1 homolog of Mycoplasma pneumoniae (strain ATCC 29342 / M129 / Subtype 1) (Mycoplasmoides pneumoniae).